The chain runs to 317 residues: Transaldolase (317 aa).

Lys-125 functions as the Schiff-base intermediate with substrate in the catalytic mechanism.

It belongs to the transaldolase family. Type 1 subfamily. Homodimer.

It localises to the cytoplasm. It carries out the reaction D-sedoheptulose 7-phosphate + D-glyceraldehyde 3-phosphate = D-erythrose 4-phosphate + beta-D-fructose 6-phosphate. It functions in the pathway carbohydrate degradation; pentose phosphate pathway; D-glyceraldehyde 3-phosphate and beta-D-fructose 6-phosphate from D-ribose 5-phosphate and D-xylulose 5-phosphate (non-oxidative stage): step 2/3. Functionally, transaldolase is important for the balance of metabolites in the pentose-phosphate pathway. This is Transaldolase from Delftia acidovorans (strain DSM 14801 / SPH-1).